Here is a 345-residue protein sequence, read N- to C-terminus: MIKLKNISKVFNVSGKNLTALDNVSLEVPQGQICGVIGASGAGKSTLIRCINLLERPTSGSVIVDNTDLTQLSDNELIHARRHIGMIFQHFNLLSSRTVFDNVALPLELEKTDKTQIKQKVDALLNLVGLYDKKDVYPANLSGGQKQRVAIARALANSPKVLLCDEATSALDPATTQSILKLLKEINRTLGITILLITHEMDVVKRICDQVAVINKGQLIEQGSVGDIFSNPKTLLAQEFIHSTFHINLPEEYMENLSATPKHAKSYPIIKFEFTGRSVDAPLLSQASKQFGVDLSILSSQIDYAGEVKFGFVIAEVEGEEEAITQTKIYLMENNVRVEVLGYVG.

The region spanning 2–241 is the ABC transporter domain; it reads IKLKNISKVF…PKTLLAQEFI (240 aa). 38–45 contributes to the ATP binding site; that stretch reads GASGAGKS.

The protein belongs to the ABC transporter superfamily. Methionine importer (TC 3.A.1.24) family. As to quaternary structure, the complex is composed of two ATP-binding proteins (MetN), two transmembrane proteins (MetI) and a solute-binding protein (MetQ).

The protein localises to the cell inner membrane. The catalysed reaction is L-methionine(out) + ATP + H2O = L-methionine(in) + ADP + phosphate + H(+). It carries out the reaction D-methionine(out) + ATP + H2O = D-methionine(in) + ADP + phosphate + H(+). In terms of biological role, part of the ABC transporter complex MetNIQ involved in methionine import. Responsible for energy coupling to the transport system. The chain is Methionine import ATP-binding protein MetN from Histophilus somni (strain 129Pt) (Haemophilus somnus).